A 179-amino-acid polypeptide reads, in one-letter code: MSRIGKLPIEVPKGVTVTFVDSVLTVKGPKGELCRTIMPEVSVAVEDGKISVTRPDDAIKSRSAHGLTRTLVNNMVVGVTAGYQTDLEINGVGYRAEVKGAELVLSLGYSHPVVFPLPSGITVEVDKMTKLAVKGIDKELVGQTAAKIRSFRGPEPYKGKGIKYATETILRKAGKTGKK.

It belongs to the universal ribosomal protein uL6 family. Part of the 50S ribosomal subunit.

This protein binds to the 23S rRNA, and is important in its secondary structure. It is located near the subunit interface in the base of the L7/L12 stalk, and near the tRNA binding site of the peptidyltransferase center. In Trichlorobacter lovleyi (strain ATCC BAA-1151 / DSM 17278 / SZ) (Geobacter lovleyi), this protein is Large ribosomal subunit protein uL6.